Here is a 142-residue protein sequence, read N- to C-terminus: Large ribosomal subunit protein uL23 (142 aa).

This sequence belongs to the universal ribosomal protein uL23 family. Component of the large ribosomal subunit. Mature ribosomes consist of a small (40S) and a large (60S) subunit. The 40S subunit contains about 32 different proteins and 1 molecule of RNA (18S). The 60S subunit contains 45 different proteins and 3 molecules of RNA (25S, 5.8S and 5S).

The protein resides in the cytoplasm. Its function is as follows. Component of the ribosome, a large ribonucleoprotein complex responsible for the synthesis of proteins in the cell. The small ribosomal subunit (SSU) binds messenger RNAs (mRNAs) and translates the encoded message by selecting cognate aminoacyl-transfer RNA (tRNA) molecules. The large subunit (LSU) contains the ribosomal catalytic site termed the peptidyl transferase center (PTC), which catalyzes the formation of peptide bonds, thereby polymerizing the amino acids delivered by tRNAs into a polypeptide chain. The nascent polypeptides leave the ribosome through a tunnel in the LSU and interact with protein factors that function in enzymatic processing, targeting, and the membrane insertion of nascent chains at the exit of the ribosomal tunnel. RPL25 is a major component of the universal docking site for these factors at the polypeptide exit tunnel. This is Large ribosomal subunit protein uL23 from Candida albicans (strain SC5314 / ATCC MYA-2876) (Yeast).